The sequence spans 604 residues: Threonine--tRNA ligase (604 aa).

The segment at 210-501 is catalytic; that stretch reads DHRKIGTEME…LTEHYAGEFP (292 aa). Zn(2+) is bound by residues Cys-302, His-353, and His-478.

Belongs to the class-II aminoacyl-tRNA synthetase family. In terms of assembly, homodimer. Zn(2+) is required as a cofactor.

The protein localises to the cytoplasm. It catalyses the reaction tRNA(Thr) + L-threonine + ATP = L-threonyl-tRNA(Thr) + AMP + diphosphate + H(+). In terms of biological role, catalyzes the attachment of threonine to tRNA(Thr) in a two-step reaction: L-threonine is first activated by ATP to form Thr-AMP and then transferred to the acceptor end of tRNA(Thr). Also edits incorrectly charged L-seryl-tRNA(Thr). In Sulfurovum sp. (strain NBC37-1), this protein is Threonine--tRNA ligase.